Reading from the N-terminus, the 210-residue chain is N-(5'-phosphoribosyl)anthranilate isomerase (210 aa).

It belongs to the TrpF family.

The catalysed reaction is N-(5-phospho-beta-D-ribosyl)anthranilate = 1-(2-carboxyphenylamino)-1-deoxy-D-ribulose 5-phosphate. It participates in amino-acid biosynthesis; L-tryptophan biosynthesis; L-tryptophan from chorismate: step 3/5. The polypeptide is N-(5'-phosphoribosyl)anthranilate isomerase (Nostoc punctiforme (strain ATCC 29133 / PCC 73102)).